We begin with the raw amino-acid sequence, 466 residues long: Asparagine--tRNA ligase (466 aa).

It belongs to the class-II aminoacyl-tRNA synthetase family. In terms of assembly, homodimer.

It localises to the cytoplasm. It catalyses the reaction tRNA(Asn) + L-asparagine + ATP = L-asparaginyl-tRNA(Asn) + AMP + diphosphate + H(+). The protein is Asparagine--tRNA ligase of Shewanella denitrificans (strain OS217 / ATCC BAA-1090 / DSM 15013).